The following is a 237-amino-acid chain: Phosphoribosylaminoimidazole-succinocarboxamide synthase (237 aa).

The protein belongs to the SAICAR synthetase family.

The enzyme catalyses 5-amino-1-(5-phospho-D-ribosyl)imidazole-4-carboxylate + L-aspartate + ATP = (2S)-2-[5-amino-1-(5-phospho-beta-D-ribosyl)imidazole-4-carboxamido]succinate + ADP + phosphate + 2 H(+). It participates in purine metabolism; IMP biosynthesis via de novo pathway; 5-amino-1-(5-phospho-D-ribosyl)imidazole-4-carboxamide from 5-amino-1-(5-phospho-D-ribosyl)imidazole-4-carboxylate: step 1/2. The polypeptide is Phosphoribosylaminoimidazole-succinocarboxamide synthase (Cronobacter sakazakii (strain ATCC BAA-894) (Enterobacter sakazakii)).